The sequence spans 533 residues: CTP synthase (533 aa).

The interval 1 to 270 (MVHLAKYIVV…GDYIVRRIEL (270 aa)) is amidoligase domain. Residue serine 16 participates in CTP binding. Residue serine 16 coordinates UTP. 17-22 (SIGKGI) provides a ligand contact to ATP. Tyrosine 57 serves as a coordination point for L-glutamine. An ATP-binding site is contributed by aspartate 74. Positions 74 and 144 each coordinate Mg(2+). Residues 151 to 153 (DIE), 191 to 196 (KTKPTQ), and lysine 227 each bind CTP. Residues 191 to 196 (KTKPTQ) and lysine 227 each bind UTP. The region spanning 303 to 533 (YVELEDSYIS…FLRAALERSR (231 aa)) is the Glutamine amidotransferase type-1 domain. Glycine 355 is a binding site for L-glutamine. Catalysis depends on cysteine 382, which acts as the Nucleophile; for glutamine hydrolysis. L-glutamine-binding positions include 383–386 (LGMQ), glutamate 405, and arginine 462. Residues histidine 507 and glutamate 509 contribute to the active site.

The protein belongs to the CTP synthase family. Homotetramer.

It catalyses the reaction UTP + L-glutamine + ATP + H2O = CTP + L-glutamate + ADP + phosphate + 2 H(+). The catalysed reaction is L-glutamine + H2O = L-glutamate + NH4(+). The enzyme catalyses UTP + NH4(+) + ATP = CTP + ADP + phosphate + 2 H(+). It participates in pyrimidine metabolism; CTP biosynthesis via de novo pathway; CTP from UDP: step 2/2. With respect to regulation, allosterically activated by GTP, when glutamine is the substrate; GTP has no effect on the reaction when ammonia is the substrate. The allosteric effector GTP functions by stabilizing the protein conformation that binds the tetrahedral intermediate(s) formed during glutamine hydrolysis. Inhibited by the product CTP, via allosteric rather than competitive inhibition. In terms of biological role, catalyzes the ATP-dependent amination of UTP to CTP with either L-glutamine or ammonia as the source of nitrogen. Regulates intracellular CTP levels through interactions with the four ribonucleotide triphosphates. This chain is CTP synthase, found in Methanothermobacter thermautotrophicus (strain ATCC 29096 / DSM 1053 / JCM 10044 / NBRC 100330 / Delta H) (Methanobacterium thermoautotrophicum).